Consider the following 137-residue polypeptide: DNA-binding protein H-NS (137 aa).

Residues 112-117 (QGRTPA) mediate DNA binding.

Belongs to the histone-like protein H-NS family. In terms of assembly, homodimer that oligomerizes on DNA into higher-order complexes that form bridges between disparate regions of DNA compacting it. Interacts with Hha, YdgT and StpA.

The protein localises to the cytoplasm. Its subcellular location is the nucleoid. Functionally, a DNA-binding protein implicated in transcriptional repression and chromosome organization and compaction. Binds nucleation sites in AT-rich DNA and bridges them, forming higher-order nucleoprotein complexes and condensing the chromosome. As many horizontally transferred genes are AT-rich, it plays a central role in silencing foreign genes. A subset of genes are repressed by H-NS in association with other proteins. This chain is DNA-binding protein H-NS (hns), found in Salmonella paratyphi A (strain ATCC 9150 / SARB42).